The chain runs to 116 residues: Large ribosomal subunit protein uL22 (116 aa).

Belongs to the universal ribosomal protein uL22 family. Part of the 50S ribosomal subunit.

This protein binds specifically to 23S rRNA; its binding is stimulated by other ribosomal proteins, e.g. L4, L17, and L20. It is important during the early stages of 50S assembly. It makes multiple contacts with different domains of the 23S rRNA in the assembled 50S subunit and ribosome. Functionally, the globular domain of the protein is located near the polypeptide exit tunnel on the outside of the subunit, while an extended beta-hairpin is found that lines the wall of the exit tunnel in the center of the 70S ribosome. The polypeptide is Large ribosomal subunit protein uL22 (Orientia tsutsugamushi (strain Boryong) (Rickettsia tsutsugamushi)).